The following is a 480-amino-acid chain: Immune evasion protein OPG047 (480 aa).

A BTB domain is found at 10 to 90; the sequence is CKNILALSMT…SYTGKVYIDS (81 aa). The BACK domain occupies 125–223; the sequence is CVECYMMGIE…NYLSPRGINN (99 aa). Kelch repeat units follow at residues 273-319, 320-363, 365-408, 410-447, and 448-480; these read VVYL…PANN, KLYV…SINN, IYVM…VFGR, LFLV…IVDN, and KLLL…WDGK.

The protein belongs to the orthopoxvirus OPG047 family.

Functionally, might have a role in the suppression of host immune response. The polypeptide is Immune evasion protein OPG047 (OPG047) (Vaccinia virus (strain Western Reserve) (VACV)).